A 1515-amino-acid polypeptide reads, in one-letter code: Metal resistance protein YCF1 (1515 aa).

The Vacuolar segment spans residues 1–32 (MAGNLVSWACKLCRSPEGFGPISFYGDFTQCF). A helical membrane pass occupies residues 33 to 53 (IDGVILNLSAIFMITFGIRDL). Topologically, residues 54–73 (VNLCKKKHSGIKYRRNWIIV) are cytoplasmic. Residues 74–94 (SRMALVLLEIAFVSLASLNIS) traverse the membrane as a helical segment. Residues 95–99 (KEEAE) lie on the Vacuolar side of the membrane. Residues 100–120 (NFTIVSQYASTMLSLFVALAL) form a helical membrane-spanning segment. Residues 121-130 (HWIEYDRSVV) are Cytoplasmic-facing. Residues 131–151 (ANTVLLFYWLFETFGNFAKLI) traverse the membrane as a helical segment. Topologically, residues 152 to 169 (NILIRHTYEGIWYSGQTG) are vacuolar. A helical transmembrane segment spans residues 170–190 (FILTLFQVITCASILLLEALP). Topologically, residues 191-278 (KKPLMPHQHI…QKSNPSLSWA (88 aa)) are cytoplasmic. Residue Ser-251 is modified to Phosphoserine. A helical transmembrane segment spans residues 279–299 (ICRTFGSKMLLAAFFKAIHDV). The ABC transmembrane type-1 1 domain maps to 287 to 590 (MLLAAFFKAI…IPMVLNSFIE (304 aa)). The Vacuolar portion of the chain corresponds to 300–345 (LAFTQPQLLRILIKFVTDYNSERQDDHSSLQGFENNHPQKLPIVRG). Residues 346–366 (FLIAFAMFLVGFTQTSVLHQY) traverse the membrane as a helical segment. Over 367–422 (FLNVFNTGMYIKSALTALIYQKSLVLSNEASGLSSTGDIVNLMSVDVQKLQDLTQW) the chain is Cytoplasmic. The chain crosses the membrane as a helical span at residues 423 to 443 (LNLIWSGPFQIIICLYSLYKL). At 444–446 (LGN) the chain is on the vacuolar side. Residues 447-467 (SMWVGVIILVIMMPLNSFLMR) traverse the membrane as a helical segment. Topologically, residues 468–530 (IQKKLQKSQM…NLTKLGCYMA (63 aa)) are cytoplasmic. A helical transmembrane segment spans residues 531–551 (VTSFQFNIVPFLVSCCTFAVF). Residues 552-572 (VYTEDRALTTDLVFPALTLFN) are Vacuolar-facing. A helical transmembrane segment spans residues 573–593 (LLSFPLMIIPMVLNSFIEASV). At 594 to 943 (SIGRLFTFFT…VKWNIYLEYA (350 aa)) the chain is on the cytoplasmic side. Residues 626 to 853 (INIGDDATFL…ADSPLWKLLN (228 aa)) form the ABC transporter 1 domain. 663–670 (GKVGSGKT) is an ATP binding site. Residues Ser-873, Ser-903, and Ser-908 each carry the phosphoserine modification. Thr-911 is modified (phosphothreonine). Ser-914 bears the Phosphoserine mark. A helical transmembrane segment spans residues 944–964 (KACNPKSVCVFILFIVISMFL). The ABC transmembrane type-1 2 domain maps to 951–1235 (VCVFILFIVI…IVRMTVEVET (285 aa)). The Vacuolar portion of the chain corresponds to 965 to 1001 (SVMGNVWLKHWSEVNSRYGSNPNAARYLAIYFALGIG). A helical membrane pass occupies residues 1002 to 1023 (SALATLIQTIVLWVFCTIHASK). The Cytoplasmic segment spans residues 1024–1066 (YLHNLMTNSVLRAPMTFFETTPIGRILNRFSNDIYKVDALLGR). A helical membrane pass occupies residues 1067-1087 (TFSQFFVNAVKVTFTITVICA). Residue Thr-1088 is a topological domain, vacuolar. A helical membrane pass occupies residues 1089–1109 (TWQFIFIIIPLSVFYIYYQQY). The Cytoplasmic segment spans residues 1110–1180 (YLRTSRELRR…NANRWLAYRL (71 aa)). Residues 1181-1201 (ELIGSIIILGAATLSVFRLKQ) traverse the membrane as a helical segment. Residues 1202-1205 (GTLT) are Vacuolar-facing. The chain crosses the membrane as a helical span at residues 1206–1226 (AGMVGLSLSYALQITQTLNWI). The Cytoplasmic portion of the chain corresponds to 1227 to 1515 (VRMTVEVETN…CMEAGLVNEN (289 aa)). Residues 1272-1507 (IKFNNYSTRY…NKSLFYSLCM (236 aa)) form the ABC transporter 2 domain. 1306–1313 (GRTGAGKS) serves as a coordination point for ATP.

This sequence belongs to the ABC transporter superfamily. ABCC family. Conjugate transporter (TC 3.A.1.208) subfamily.

It localises to the vacuole membrane. The catalysed reaction is Cd(2+)(in) + ATP + H2O = Cd(2+)(out) + ADP + phosphate + H(+). It catalyses the reaction an S-substituted glutathione(in) + ATP + H2O = an S-substituted glutathione(out) + ADP + phosphate + H(+). Cooperates for the ATP-dependent vacuolar transport of bilirubin and glutathione conjugates. This Saccharomyces cerevisiae (strain ATCC 204508 / S288c) (Baker's yeast) protein is Metal resistance protein YCF1 (YCF1).